Reading from the N-terminus, the 234-residue chain is Phosphoribosylaminoimidazole-succinocarboxamide synthase (234 aa).

Belongs to the SAICAR synthetase family.

It carries out the reaction 5-amino-1-(5-phospho-D-ribosyl)imidazole-4-carboxylate + L-aspartate + ATP = (2S)-2-[5-amino-1-(5-phospho-beta-D-ribosyl)imidazole-4-carboxamido]succinate + ADP + phosphate + 2 H(+). It functions in the pathway purine metabolism; IMP biosynthesis via de novo pathway; 5-amino-1-(5-phospho-D-ribosyl)imidazole-4-carboxamide from 5-amino-1-(5-phospho-D-ribosyl)imidazole-4-carboxylate: step 1/2. In Staphylococcus epidermidis (strain ATCC 35984 / DSM 28319 / BCRC 17069 / CCUG 31568 / BM 3577 / RP62A), this protein is Phosphoribosylaminoimidazole-succinocarboxamide synthase.